We begin with the raw amino-acid sequence, 311 residues long: tRNA-cytidine(32) 2-sulfurtransferase (311 aa).

The PP-loop motif signature appears at 47-52 (SGGKDS). [4Fe-4S] cluster-binding residues include cysteine 122, cysteine 125, and cysteine 213.

This sequence belongs to the TtcA family. Homodimer. Mg(2+) serves as cofactor. Requires [4Fe-4S] cluster as cofactor.

The protein resides in the cytoplasm. It catalyses the reaction cytidine(32) in tRNA + S-sulfanyl-L-cysteinyl-[cysteine desulfurase] + AH2 + ATP = 2-thiocytidine(32) in tRNA + L-cysteinyl-[cysteine desulfurase] + A + AMP + diphosphate + H(+). It functions in the pathway tRNA modification. Functionally, catalyzes the ATP-dependent 2-thiolation of cytidine in position 32 of tRNA, to form 2-thiocytidine (s(2)C32). The sulfur atoms are provided by the cysteine/cysteine desulfurase (IscS) system. This Salmonella typhi protein is tRNA-cytidine(32) 2-sulfurtransferase.